Consider the following 420-residue polypeptide: MSFIQSQDPAIWDAIQAETTRQQDGLEMIASENYTSPAIMEAVGSILTNKYAEGYPGRRYYGGCEHVDVVETIAIDRAKELFGAEAANVQPHSGSQANAAVYLSCLEVGDTVLGLDLAQGGHLTHGMKLNMSGRLYNFVNYGVDKVNHRLDFDQIVKLAREHKPKLIVAGASAYPREIPHDRFKEIADEVGAKLMVDMAHYAGLVAAKIHNSPVPYADYVTTTTHKTLRGPRSGLIMCKEEHLKLVNRNVFPGTQGGPLMHVVAGKAICFAEAMTEEYAHYGQAVVDNAKTLADTLLSCGLRLVSGGTDNHLMLVDVTAVDLGGKKAEAVLDACGITVNMNMIPFDQRKPMDPSGIRIGTPALTTRGMGGDEMKRIGQWIYNALSDSDNAALHESIRTEIREMVQAFPVPAAAESPATVA.

Residues Leu117 and 121-123 (GHL) each bind (6S)-5,6,7,8-tetrahydrofolate. Lys226 carries the N6-(pyridoxal phosphate)lysine modification.

It belongs to the SHMT family. As to quaternary structure, homodimer. It depends on pyridoxal 5'-phosphate as a cofactor.

The protein resides in the cytoplasm. The catalysed reaction is (6R)-5,10-methylene-5,6,7,8-tetrahydrofolate + glycine + H2O = (6S)-5,6,7,8-tetrahydrofolate + L-serine. Its pathway is one-carbon metabolism; tetrahydrofolate interconversion. It functions in the pathway amino-acid biosynthesis; glycine biosynthesis; glycine from L-serine: step 1/1. In terms of biological role, catalyzes the reversible interconversion of serine and glycine with tetrahydrofolate (THF) serving as the one-carbon carrier. This reaction serves as the major source of one-carbon groups required for the biosynthesis of purines, thymidylate, methionine, and other important biomolecules. Also exhibits THF-independent aldolase activity toward beta-hydroxyamino acids, producing glycine and aldehydes, via a retro-aldol mechanism. The protein is Serine hydroxymethyltransferase of Rhodopirellula baltica (strain DSM 10527 / NCIMB 13988 / SH1).